A 177-amino-acid chain; its full sequence is Adenine phosphoribosyltransferase (177 aa).

Belongs to the purine/pyrimidine phosphoribosyltransferase family. In terms of assembly, homodimer.

The protein resides in the cytoplasm. It carries out the reaction AMP + diphosphate = 5-phospho-alpha-D-ribose 1-diphosphate + adenine. Its pathway is purine metabolism; AMP biosynthesis via salvage pathway; AMP from adenine: step 1/1. Its function is as follows. Catalyzes a salvage reaction resulting in the formation of AMP, that is energically less costly than de novo synthesis. This chain is Adenine phosphoribosyltransferase, found in Chlorobium phaeobacteroides (strain BS1).